A 155-amino-acid polypeptide reads, in one-letter code: Low molecular weight phosphotyrosine protein phosphatase 1 (155 aa).

C9 acts as the Nucleophile in catalysis. Residue R15 is part of the active site. The Proton donor role is filled by D124.

This sequence belongs to the low molecular weight phosphotyrosine protein phosphatase family. As to expression, cone cells and primary pigment cells in developing pupal retina.

Its subcellular location is the cytoplasm. It carries out the reaction O-phospho-L-tyrosyl-[protein] + H2O = L-tyrosyl-[protein] + phosphate. The enzyme catalyses a phosphate monoester + H2O = an alcohol + phosphate. In terms of biological role, acts on tyrosine phosphorylated proteins, low-MW aryl phosphates and natural and synthetic acyl phosphates. The chain is Low molecular weight phosphotyrosine protein phosphatase 1 (primo-1) from Drosophila melanogaster (Fruit fly).